The primary structure comprises 91 residues: Small ribosomal subunit protein uS19 (91 aa).

Belongs to the universal ribosomal protein uS19 family.

Protein S19 forms a complex with S13 that binds strongly to the 16S ribosomal RNA. The polypeptide is Small ribosomal subunit protein uS19 (Colwellia psychrerythraea (strain 34H / ATCC BAA-681) (Vibrio psychroerythus)).